A 336-amino-acid polypeptide reads, in one-letter code: Coproporphyrin III ferrochelatase (336 aa).

2 residues coordinate Fe-coproporphyrin III: S52 and Y116. Fe(2+)-binding residues include H172 and E255.

It belongs to the ferrochelatase family.

It localises to the cytoplasm. The catalysed reaction is Fe-coproporphyrin III + 2 H(+) = coproporphyrin III + Fe(2+). It participates in porphyrin-containing compound metabolism; protoheme biosynthesis. Functionally, involved in coproporphyrin-dependent heme b biosynthesis. Catalyzes the insertion of ferrous iron into coproporphyrin III to form Fe-coproporphyrin III. This chain is Coproporphyrin III ferrochelatase, found in Mycobacterium avium (strain 104).